We begin with the raw amino-acid sequence, 142 residues long: Nucleoside diphosphate kinase (142 aa).

ATP-binding residues include K11, F59, R87, T93, R104, and N114. Residue H117 is the Pros-phosphohistidine intermediate of the active site.

This sequence belongs to the NDK family. Homotetramer. Mg(2+) serves as cofactor.

It is found in the cytoplasm. The catalysed reaction is a 2'-deoxyribonucleoside 5'-diphosphate + ATP = a 2'-deoxyribonucleoside 5'-triphosphate + ADP. It catalyses the reaction a ribonucleoside 5'-diphosphate + ATP = a ribonucleoside 5'-triphosphate + ADP. Its function is as follows. Major role in the synthesis of nucleoside triphosphates other than ATP. The ATP gamma phosphate is transferred to the NDP beta phosphate via a ping-pong mechanism, using a phosphorylated active-site intermediate. The protein is Nucleoside diphosphate kinase of Wigglesworthia glossinidia brevipalpis.